Consider the following 155-residue polypeptide: Small ribosomal subunit protein uS7 (155 aa).

It belongs to the universal ribosomal protein uS7 family. As to quaternary structure, part of the 30S ribosomal subunit. Contacts proteins S9 and S11.

In terms of biological role, one of the primary rRNA binding proteins, it binds directly to 16S rRNA where it nucleates assembly of the head domain of the 30S subunit. Is located at the subunit interface close to the decoding center, probably blocks exit of the E-site tRNA. This Xylella fastidiosa (strain M23) protein is Small ribosomal subunit protein uS7.